A 247-amino-acid polypeptide reads, in one-letter code: E3 SUMO-protein ligase NSE2 (247 aa).

At Met-1 the chain carries N-acetylmethionine. Glycyl lysine isopeptide (Lys-Gly) (interchain with G-Cter in SUMO2) cross-links involve residues Lys-90 and Lys-107. A Phosphoserine modification is found at Ser-116. Glycyl lysine isopeptide (Lys-Gly) (interchain with G-Cter in SUMO2) cross-links involve residues Lys-125 and Lys-130. The SP-RING-type zinc finger occupies 154–240 (MDEDMIVTQS…LRRAIESHNK (87 aa)). Residues Cys-185, His-187, Cys-210, and Cys-215 each contribute to the Zn(2+) site.

The protein belongs to the NSE2 family. Component of the SMC5-SMC6 complex which consists at least of SMC5, SMC6, NSMCE2, NSMCE1, NSMCE4A or EID3 and NSMCE3. In terms of processing, sumoylated, possibly via autosumoylation.

It is found in the nucleus. The protein localises to the chromosome. Its subcellular location is the telomere. The protein resides in the PML body. It functions in the pathway protein modification; protein sumoylation. In terms of biological role, E3 SUMO-protein ligase component of the SMC5-SMC6 complex, a complex involved in DNA double-strand break repair by homologous recombination. Is not be required for the stability of the complex. The complex may promote sister chromatid homologous recombination by recruiting the SMC1-SMC3 cohesin complex to double-strand breaks. Acts as an E3 ligase mediating SUMO attachment to various proteins such as SMC6L1 and TSNAX, the shelterin complex subunits TERF1, TERF2, TINF2 and TERF2IP, RAD51AP1, and maybe the cohesin components RAD21 and STAG2. Required for recruitment of telomeres to PML nuclear bodies. Required for sister chromatid cohesion during prometaphase and mitotic progression. This Rattus norvegicus (Rat) protein is E3 SUMO-protein ligase NSE2 (Nsmce2).